A 126-amino-acid polypeptide reads, in one-letter code: Small ribosomal subunit protein bS6 (126 aa).

A disordered region spans residues Arg107–Ala126.

Belongs to the bacterial ribosomal protein bS6 family.

Functionally, binds together with bS18 to 16S ribosomal RNA. This Caulobacter sp. (strain K31) protein is Small ribosomal subunit protein bS6.